A 308-amino-acid polypeptide reads, in one-letter code: D-alanine--D-alanine ligase (308 aa).

The ATP-grasp domain occupies 108-303 (KLVWKAAGLP…YEALCLKVLE (196 aa)). 134-189 (EAELGLPMFVKPACEGSSLGVTKVRKAGELAQAYAEARKFDPLVLAEQFVGGGEYT) contributes to the ATP binding site. Mg(2+)-binding residues include Asp-257, Glu-270, and Asn-272.

It belongs to the D-alanine--D-alanine ligase family. Mg(2+) serves as cofactor. Mn(2+) is required as a cofactor.

The protein resides in the cytoplasm. The enzyme catalyses 2 D-alanine + ATP = D-alanyl-D-alanine + ADP + phosphate + H(+). Its pathway is cell wall biogenesis; peptidoglycan biosynthesis. In terms of biological role, cell wall formation. The protein is D-alanine--D-alanine ligase of Laribacter hongkongensis (strain HLHK9).